A 354-amino-acid chain; its full sequence is Uroporphyrinogen decarboxylase (354 aa).

Substrate contacts are provided by residues 27 to 31 (RQAGR), D77, Y154, S209, and H327.

The protein belongs to the uroporphyrinogen decarboxylase family. In terms of assembly, homodimer.

The protein resides in the cytoplasm. The enzyme catalyses uroporphyrinogen III + 4 H(+) = coproporphyrinogen III + 4 CO2. It functions in the pathway porphyrin-containing compound metabolism; protoporphyrin-IX biosynthesis; coproporphyrinogen-III from 5-aminolevulinate: step 4/4. Its function is as follows. Catalyzes the decarboxylation of four acetate groups of uroporphyrinogen-III to yield coproporphyrinogen-III. The polypeptide is Uroporphyrinogen decarboxylase (Shewanella denitrificans (strain OS217 / ATCC BAA-1090 / DSM 15013)).